The primary structure comprises 244 residues: Ribonuclease PH (244 aa).

Residues Arg-86 and 124-126 (GTR) each bind phosphate.

It belongs to the RNase PH family. In terms of assembly, homohexameric ring arranged as a trimer of dimers.

The catalysed reaction is tRNA(n+1) + phosphate = tRNA(n) + a ribonucleoside 5'-diphosphate. In terms of biological role, phosphorolytic 3'-5' exoribonuclease that plays an important role in tRNA 3'-end maturation. Removes nucleotide residues following the 3'-CCA terminus of tRNAs; can also add nucleotides to the ends of RNA molecules by using nucleoside diphosphates as substrates, but this may not be physiologically important. Probably plays a role in initiation of 16S rRNA degradation (leading to ribosome degradation) during starvation. This Oceanobacillus iheyensis (strain DSM 14371 / CIP 107618 / JCM 11309 / KCTC 3954 / HTE831) protein is Ribonuclease PH.